The following is a 246-amino-acid chain: 2-deoxyglucose-6-phosphate phosphatase 1 (246 aa).

Residue D83 is the Nucleophile of the active site. D83 provides a ligand contact to Mg(2+). Substrate contacts are provided by residues D83, E92, and 146–149; that span reads DVKN. Mg(2+) is bound at residue D183.

It belongs to the HAD-like hydrolase superfamily. DOG/GPP family. Requires Mg(2+) as cofactor.

It catalyses the reaction 2-deoxy-D-glucose 6-phosphate + H2O = 2-deoxy-D-glucose + phosphate. Its function is as follows. Phosphatase that is active on 2-deoxy-D-glucose 6-phosphate (2-DOG-6P), as well as on fructose-1-P. The protein is 2-deoxyglucose-6-phosphate phosphatase 1 of Saccharomyces cerevisiae (strain ATCC 204508 / S288c) (Baker's yeast).